The following is a 729-amino-acid chain: MKLSNEYAWIIPLCPLIASCCTGSLSFFFPRVARGFHRLCALLNVFSLAISMFVSLAIFQEQFVKNPIQQYLWIWIPRSTFCVEIGFLVDSLTLVMSLLVTTVGVLVMIYSDSYMCYDRGYTRFYAYLSLFTASMLGLVLSPNLIQLYVFWELVGMCSYLLVGFWFARSSAANACQKAFVTNRIGDFGLLLGILGIYWTTGSFEISELCDRFAKLKEIGFSNPILTNIIAFLLLAGPVAKSAQFPLHVWLPDAMEGPTPISALIHAATMVAAGIFFIARIYGLISTLPLVMQASSWLGGATALLGATLALAQRDLKKGLAYSTMSQLGYMVLALGIGAYQSALFHLVTHAYSKALLFLGAGSVIHSIEKVVGYSPNRSQNMFFMGGLRKYMPITGTTFLLGTLSLSGIPPLACFWSKDEIIHESWLSSLPLGILASGTAGLTAFYMFRIYLLTFEGDFCTIKTDWVDFNHFAPLSISMWGETEGNLSLNQINQNVASVRLGITKNKGFSSSYLANPNGITNVHYDQSLPKPKESSSAMTFSLVMLAIPTTLVGLLGINLIGETANFELSPEWLINPVHFFELSKSFNIYIKILLNSRSSLILSFFGIFFSFIIYKKSYKYFYITKKLVGFTKLVSKFGLLVQSWSLNRGYIDYYYDICFVRNLRSLSKSLSDFDRYGIDGFVNVIGALNFFGGEFIRYGENGRISYYLFIIIFGAILSSVLIFIFLPFP.

A run of 18 helical transmembrane segments spans residues 9 to 29, 39 to 59, 87 to 107, 125 to 145, 147 to 167, 184 to 204, 218 to 238, 258 to 278, 289 to 311, 327 to 347, 354 to 374, 395 to 415, 425 to 445, 540 to 560, 592 to 612, 627 to 646, 676 to 696, and 708 to 728; these read WIIPLCPLIASCCTGSLSFFF, LCALLNVFSLAISMFVSLAIF, FLVDSLTLVMSLLVTTVGVLV, YAYLSLFTASMLGLVLSPNLI, LYVFWELVGMCSYLLVGFWFA, IGDFGLLLGILGIYWTTGSFE, IGFSNPILTNIIAFLLLAGPV, TPISALIHAATMVAAGIFFIA, LVMQASSWLGGATALLGATLALA, LGYMVLALGIGAYQSALFHLV, ALLFLGAGSVIHSIEKVVGYS, GTTFLLGTLSLSGIPPLACFW, WLSSLPLGILASGTAGLTAFY, FSLVMLAIPTTLVGLLGINLI, ILLNSRSSLILSFFGIFFSFI, LVGFTKLVSKFGLLVQSWSL, YGIDGFVNVIGALNFFGGEFI, and LFIIIFGAILSSVLIFIFLPF.

It belongs to the complex I subunit 5 family. As to quaternary structure, NDH is composed of at least 16 different subunits, 5 of which are encoded in the nucleus.

It localises to the plastid. The protein resides in the chloroplast thylakoid membrane. It catalyses the reaction a plastoquinone + NADH + (n+1) H(+)(in) = a plastoquinol + NAD(+) + n H(+)(out). It carries out the reaction a plastoquinone + NADPH + (n+1) H(+)(in) = a plastoquinol + NADP(+) + n H(+)(out). Functionally, NDH shuttles electrons from NAD(P)H:plastoquinone, via FMN and iron-sulfur (Fe-S) centers, to quinones in the photosynthetic chain and possibly in a chloroplast respiratory chain. The immediate electron acceptor for the enzyme in this species is believed to be plastoquinone. Couples the redox reaction to proton translocation, and thus conserves the redox energy in a proton gradient. The protein is NAD(P)H-quinone oxidoreductase subunit 5, chloroplastic (ndhF) of Adiantum capillus-veneris (Maidenhair fern).